The sequence spans 453 residues: 3-phosphoshikimate 1-carboxyvinyltransferase (453 aa).

A disordered region spans residues 1 to 25 (MSHDSEPQPVTAHPAGPLTGALKPP). Lys-28, Ser-29, and Arg-33 together coordinate 3-phosphoshikimate. Lys-28 is a phosphoenolpyruvate binding site. Positions 101 and 129 each coordinate phosphoenolpyruvate. 3-phosphoshikimate contacts are provided by Ser-175, Gln-177, Asp-330, and Lys-357. Gln-177 contributes to the phosphoenolpyruvate binding site. The active-site Proton acceptor is the Asp-330. Phosphoenolpyruvate is bound by residues Arg-361 and Arg-405.

Belongs to the EPSP synthase family. As to quaternary structure, monomer.

Its subcellular location is the cytoplasm. The catalysed reaction is 3-phosphoshikimate + phosphoenolpyruvate = 5-O-(1-carboxyvinyl)-3-phosphoshikimate + phosphate. The protein operates within metabolic intermediate biosynthesis; chorismate biosynthesis; chorismate from D-erythrose 4-phosphate and phosphoenolpyruvate: step 6/7. In terms of biological role, catalyzes the transfer of the enolpyruvyl moiety of phosphoenolpyruvate (PEP) to the 5-hydroxyl of shikimate-3-phosphate (S3P) to produce enolpyruvyl shikimate-3-phosphate and inorganic phosphate. In Methylorubrum populi (strain ATCC BAA-705 / NCIMB 13946 / BJ001) (Methylobacterium populi), this protein is 3-phosphoshikimate 1-carboxyvinyltransferase.